A 180-amino-acid polypeptide reads, in one-letter code: Shikimate kinase (180 aa).

ATP is bound at residue 19-24 (GAGKTT). T23 is a binding site for Mg(2+). Substrate contacts are provided by D41, R65, and G87. R125 contacts ATP. Substrate is bound at residue R144.

Belongs to the shikimate kinase family. Monomer. The cofactor is Mg(2+).

It is found in the cytoplasm. It catalyses the reaction shikimate + ATP = 3-phosphoshikimate + ADP + H(+). It functions in the pathway metabolic intermediate biosynthesis; chorismate biosynthesis; chorismate from D-erythrose 4-phosphate and phosphoenolpyruvate: step 5/7. Catalyzes the specific phosphorylation of the 3-hydroxyl group of shikimic acid using ATP as a cosubstrate. This is Shikimate kinase from Acinetobacter baumannii (strain SDF).